The chain runs to 573 residues: Estrogen receptor beta (573 aa).

The modulating stretch occupies residues 15–170 (QEVDSSKVGE…CFAGKGDMHF (156 aa)). 2 NR C4-type zinc fingers span residues 171–191 (CAVC…CEGC) and 207–231 (CPAT…LRKC). The nuclear receptor DNA-binding region spans 171–236 (CAVCHDYASG…RLRKCYEVGM (66 aa)). One can recognise an NR LBD domain in the interval 291–527 (TPEQLINRII…DLLLEMLDAN (237 aa)). Composition is skewed to low complexity over residues 534–552 (MSAS…AQSQ) and 559–573 (CSGE…SSTI). The interval 534-573 (MSASYSSQPSPWSQAAQSQPGPPPSCSGECPCPPKESSTI) is disordered.

This sequence belongs to the nuclear hormone receptor family. NR3 subfamily. In terms of assembly, binds DNA as a homodimer. Can form a heterodimer with ER-alpha. In terms of tissue distribution, liver.

It is found in the nucleus. Functionally, binds estrogens with an affinity similar to that of ER-alpha, and activates expression of reporter genes containing estrogen response elements (ERE) in an estrogen-dependent manner. This is Estrogen receptor beta (esr2) from Anguilla japonica (Japanese eel).